Reading from the N-terminus, the 81-residue chain is Sec-independent protein translocase protein TatA (81 aa).

Residues 1 to 21 (MGGISVWQLLIIAVIVVLLFG) form a helical membrane-spanning segment. Residues 42-81 (AMSDEDSAKNEKDADFEPKSLEKQQQKEAAPETKKDKEQA) form a disordered region.

It belongs to the TatA/E family. In terms of assembly, the Tat system comprises two distinct complexes: a TatABC complex, containing multiple copies of TatA, TatB and TatC subunits, and a separate TatA complex, containing only TatA subunits. Substrates initially bind to the TatABC complex, which probably triggers association of the separate TatA complex to form the active translocon.

It localises to the cell inner membrane. Its function is as follows. Part of the twin-arginine translocation (Tat) system that transports large folded proteins containing a characteristic twin-arginine motif in their signal peptide across membranes. TatA could form the protein-conducting channel of the Tat system. The polypeptide is Sec-independent protein translocase protein TatA (Vibrio parahaemolyticus serotype O3:K6 (strain RIMD 2210633)).